Reading from the N-terminus, the 115-residue chain is uncharacterized protein (115 aa).

This sequence belongs to the transposase 34 family.

This is an uncharacterized protein from Sinorhizobium fredii (strain NBRC 101917 / NGR234).